A 304-amino-acid chain; its full sequence is MSLFHLIAPSGYCIKQHAALRGIQRLTDAGHQVNNVEVIARRCERFAGTETERLEDLNSLARLTTPNTIVLAVRGGYGASRLLADIDWQALVARQQYDPLLICGHSDFTAIQCGLLAQGNVITFSGPMLVANFGADELNTFTEHHFWLALRNETFTIEWQGEGPTCRAEGTLWGGNLAMLISLIGTPWMPKIENGILVLEDINEHPFRVERMLLQLYHAGILPRQKAIILGSFSGSTPNDYDAGYNLESVYAFLRSRLSIPLITGLDFGHEQRTVTLPLGAHAILTNTREGTQLTISGHPVLKM.

Ser-106 (nucleophile) is an active-site residue. Residues Glu-200 and His-270 each act as charge relay system in the active site.

This sequence belongs to the peptidase S66 family.

The protein localises to the cytoplasm. It carries out the reaction N-acetyl-D-glucosaminyl-N-acetylmuramoyl-L-alanyl-meso-2,6-diaminoheptanedioyl-D-alanine + H2O = N-acetyl-D-glucosaminyl-N-acetylmuramoyl-L-alanyl-meso-2,6-diaminoheptanedioate + D-alanine. It participates in cell wall biogenesis; peptidoglycan recycling. In terms of biological role, releases the terminal D-alanine residue from the cytoplasmic tetrapeptide recycling product L-Ala-gamma-D-Glu-meso-Dap-D-Ala. Can also cleave D-Ala from murein derivatives containing the tetrapeptide, i.e. MurNAc-tetrapeptide, UDP-MurNAc-tetrapeptide, GlcNAc-MurNAc-tetrapeptide, and GlcNAc-anhMurNAc-tetrapeptide. Does not act on murein sacculi or cross-linked muropeptides. The tripeptides produced by the LcdA reaction can then be reused as peptidoglycan building blocks; LcdA is thereby involved in murein recycling. The chain is Murein tetrapeptide carboxypeptidase (ldcA) from Escherichia coli O157:H7.